Reading from the N-terminus, the 118-residue chain is UPF0342 protein BT9727_0768 (118 aa).

Belongs to the UPF0342 family.

The chain is UPF0342 protein BT9727_0768 from Bacillus thuringiensis subsp. konkukian (strain 97-27).